The sequence spans 387 residues: Chorismate synthase (387 aa).

R42 and R48 together coordinate NADP(+). FMN contacts are provided by residues 131–133 (RSS), 251–252 (QA), G295, 310–314 (KPIPT), and R336.

It belongs to the chorismate synthase family. As to quaternary structure, homotetramer. It depends on FMNH2 as a cofactor.

It catalyses the reaction 5-O-(1-carboxyvinyl)-3-phosphoshikimate = chorismate + phosphate. It participates in metabolic intermediate biosynthesis; chorismate biosynthesis; chorismate from D-erythrose 4-phosphate and phosphoenolpyruvate: step 7/7. Functionally, catalyzes the anti-1,4-elimination of the C-3 phosphate and the C-6 proR hydrogen from 5-enolpyruvylshikimate-3-phosphate (EPSP) to yield chorismate, which is the branch point compound that serves as the starting substrate for the three terminal pathways of aromatic amino acid biosynthesis. This reaction introduces a second double bond into the aromatic ring system. This Syntrophotalea carbinolica (strain DSM 2380 / NBRC 103641 / GraBd1) (Pelobacter carbinolicus) protein is Chorismate synthase.